The sequence spans 130 residues: Leptin receptor gene-related protein (130 aa).

The next 4 membrane-spanning stretches (helical) occupy residues 7-27 (LVALSFSGALGLTFLLLGCAL), 32-52 (QYWPMFVLIFYILSPIPNLIA), 68-88 (LAYFLTTGIVVSAYGLPVVLA), and 99-119 (GLVMAGNCVIFLTILGFFLIF).

This sequence belongs to the OB-RGRP/VPS55 family.

It is found in the golgi apparatus membrane. It localises to the endosome membrane. Its function is as follows. Involved in protein trafficking. May be involved in the down-regulation of membrane protein levels. This Danio rerio (Zebrafish) protein is Leptin receptor gene-related protein (leprot).